A 359-amino-acid polypeptide reads, in one-letter code: Pyruvate dehydrogenase E1 component subunit beta, mitochondrial (359 aa).

A mitochondrion-targeting transit peptide spans 1 to 30; the sequence is MAAVSGLVRRPLREVSGLLKRRFHWTAPAA. Phosphotyrosine is present on Y67. E89 provides a ligand contact to thiamine diphosphate. Residues I142, A190, I191, D193, and N195 each coordinate K(+). At K354 the chain carries N6-acetyllysine.

As to quaternary structure, heterotetramer of two PDHA1 and two PDHB subunits. The heterotetramer interacts with DLAT, and is part of the multimeric pyruvate dehydrogenase complex that contains multiple copies of pyruvate dehydrogenase (E1), dihydrolipoamide acetyltransferase (DLAT, E2) and lipoamide dehydrogenase (DLD, E3). These subunits are bound to an inner core composed of about 48 DLAT and 12 PDHX molecules. Interacts with DLAT. It depends on thiamine diphosphate as a cofactor.

Its subcellular location is the mitochondrion matrix. The catalysed reaction is N(6)-[(R)-lipoyl]-L-lysyl-[protein] + pyruvate + H(+) = N(6)-[(R)-S(8)-acetyldihydrolipoyl]-L-lysyl-[protein] + CO2. In terms of biological role, the pyruvate dehydrogenase complex catalyzes the overall conversion of pyruvate to acetyl-CoA and CO(2), and thereby links the glycolytic pathway to the tricarboxylic cycle. The protein is Pyruvate dehydrogenase E1 component subunit beta, mitochondrial (PDHB) of Homo sapiens (Human).